Here is a 283-residue protein sequence, read N- to C-terminus: 1-acyl-sn-glycerol-3-phosphate acyltransferase alpha (283 aa).

Residues 1–26 (MDLWPGAWMLLLLLFLLLLFLLPTLW) form the signal peptide. The Lumenal portion of the chain corresponds to 27 to 37 (FCSPSAKYFFK). A helical membrane pass occupies residues 38–58 (MAFYNGWILFLAVLAIPVCAV). Residues 59–127 (RGRNVENMKI…PGRCVPIAKR (69 aa)) are Cytoplasmic-facing. The HXXXXD motif motif lies at 104-109 (HQSSLD). The chain crosses the membrane as a helical span at residues 128-148 (ELLWAGSAGLACWLAGVIFID). Residues 149 to 283 (RKRTGDAISV…DYLKKPGGGG (135 aa)) lie on the Lumenal side of the membrane. An EGTR motif motif is present at residues 178 to 181 (EGTR).

This sequence belongs to the 1-acyl-sn-glycerol-3-phosphate acyltransferase family. As to expression, widely expressed. Expressed in adipose tissue and at high levels in testis and pancreas. Expressed at lower levels in tissues such as heart, brain, placenta, kidney, lung, spleen, thymus, prostate, ovary, intestine, colon, leukocyte and liver.

The protein localises to the endoplasmic reticulum membrane. It carries out the reaction a 1-acyl-sn-glycero-3-phosphate + an acyl-CoA = a 1,2-diacyl-sn-glycero-3-phosphate + CoA. The catalysed reaction is 1-(9Z-octadecenoyl)-sn-glycero-3-phosphate + (9Z)-octadecenoyl-CoA = 1,2-di-(9Z-octadecenoyl)-sn-glycero-3-phosphate + CoA. The enzyme catalyses 1-(9Z-octadecenoyl)-sn-glycero-3-phosphate + hexadecanoyl-CoA = 1-(9Z)-octadecenoyl-2-hexadecanoyl-sn-glycero-3-phosphate + CoA. It catalyses the reaction heptadecanoyl-CoA + 1-(9Z-octadecenoyl)-sn-glycero-3-phosphate = 1-(9Z)-octadecenoyl-2-heptadecanoyl-sn-glycero-3-phosphate + CoA. It carries out the reaction 1-(9Z-octadecenoyl)-sn-glycero-3-phosphate + octadecanoyl-CoA = 1-(9Z-octadecenoyl)-2-octadecanoyl-sn-glycero-3-phosphate + CoA. The catalysed reaction is 1-(9Z-octadecenoyl)-sn-glycero-3-phosphate + (9Z,12Z)-octadecadienoyl-CoA = 1-(9Z)-octadecenoyl-2-(9Z,12Z)-octadecadienoyl-sn-glycero-3-phosphate + CoA. The enzyme catalyses 1-(9Z-octadecenoyl)-sn-glycero-3-phosphate + tetradecanoyl-CoA = 1-(9Z)-octadecenoyl-2-tetradecanoyl-sn-glycero-3-phosphate + CoA. It catalyses the reaction pentadecanoyl-CoA + 1-(9Z-octadecenoyl)-sn-glycero-3-phosphate = 1-(9Z)-octadecenoyl-2-pentadecanoyl-sn-glycero-3-phosphate + CoA. It carries out the reaction 1-hexadecanoyl-sn-glycero-3-phosphate + (9Z)-octadecenoyl-CoA = 1-hexadecanoyl-2-(9Z-octadecenoyl)-sn-glycero-3-phosphate + CoA. The catalysed reaction is 1-(9Z,12Z,15Z)-octadecatrienoyl-sn-glycero-3-phosphate + (9Z)-octadecenoyl-CoA = 1-(9Z,12Z,15Z)-octadecatrienoyl-2-(9Z)-octadecenoyl-sn-glycero-3-phosphate + CoA. The enzyme catalyses 1-(6Z,9Z,12Z-octadecatrienoyl)-sn-glycero-3-phosphate + (9Z)-octadecenoyl-CoA = (6Z,9Z,12Z)-octadecatrienoyl-2-(9Z)-octadecenoyl-sn-glycero-3-phosphate + CoA. It catalyses the reaction 1-eicosanoyl-sn-glycero-3-phosphate + (9Z)-octadecenoyl-CoA = 1-eicosanoyl-2-(9Z)-octadecenoyl-sn-glycero-3-phosphate + CoA. It carries out the reaction 1-tetradecanoyl-sn-glycerol 3-phosphate + (9Z)-octadecenoyl-CoA = 1-tetradecanoyl-2-(9Z)-octadecenoyl-sn-glycero-3-phosphate + CoA. The catalysed reaction is 1-(9Z-octadecenoyl)-sn-glycero-3-phosphate + (5Z,8Z,11Z,14Z)-eicosatetraenoyl-CoA = 1-(9Z)-octadecenoyl-2-(5Z,8Z,11Z,14Z)-eicosatetraenoyl-sn-glycero-3-phosphate + CoA. The enzyme catalyses 1-(9Z-octadecenoyl)-sn-glycero-3-phosphate + dodecanoyl-CoA = 1-(9Z)-octadecenoyl-2-dodecanoyl-sn-glycero-3-phosphate + CoA. It catalyses the reaction (6Z)-octadecenoyl-CoA + 1-(9Z-octadecenoyl)-sn-glycero-3-phosphate = 1-(9Z)-octadecenoyl-2-(6Z)-octadecenoyl-sn-glycero-3-phosphate + CoA. It carries out the reaction (11Z)-octadecenoyl-CoA + 1-(9Z-octadecenoyl)-sn-glycero-3-phosphate = 1-(9Z)-octadecenoyl-2-(11Z)-octadecenoyl-sn-glycero-3-phosphate + CoA. The catalysed reaction is (9Z)-hexadecenoyl-CoA + 1-(9Z-octadecenoyl)-sn-glycero-3-phosphate = 1-(9Z-octadecenoyl)-2-(9Z-hexadecenoyl)-sn-glycero-3-phosphate + CoA. It functions in the pathway phospholipid metabolism; CDP-diacylglycerol biosynthesis; CDP-diacylglycerol from sn-glycerol 3-phosphate: step 2/3. In terms of biological role, converts 1-acyl-sn-glycerol-3-phosphate (lysophosphatidic acid or LPA) into 1,2-diacyl-sn-glycerol-3-phosphate (phosphatidic acid or PA) by incorporating an acyl moiety at the sn-2 position of the glycerol backbone. In Homo sapiens (Human), this protein is 1-acyl-sn-glycerol-3-phosphate acyltransferase alpha (AGPAT1).